A 436-amino-acid chain; its full sequence is Alpha-2 adrenergic receptor (436 aa).

The Extracellular portion of the chain corresponds to 1 to 27; the sequence is MDVTQSNATKDDANITVTPWPYTETAA. N-linked (GlcNAc...) asparagine glycosylation is found at Asn-7 and Asn-14. Residues 28 to 52 form a helical membrane-spanning segment; it reads AFIILVVSVIILVSIVGNVLVIVAV. At 53-64 the chain is on the cytoplasmic side; sequence LTSRALRAPQNL. Residues 65-90 form a helical membrane-spanning segment; sequence FLVSLACADILVATLVIPFSLANEIM. Residues 91 to 100 lie on the Extracellular side of the membrane; sequence GYWFFGSTWC. Cys-100 and Cys-173 form a disulfide bridge. A helical transmembrane segment spans residues 101–123; sequence AFYLALDVLFCTSSIVHLCAISL. The Cytoplasmic segment spans residues 124-144; that stretch reads DRYWSVTKAVSYNLKRTPKRI. The chain crosses the membrane as a helical span at residues 145-167; it reads KSMIAVVWVISAVISFPPLIMTK. Over 168 to 178 the chain is Extracellular; the sequence is HDEKECLINDE. A helical membrane pass occupies residues 179-202; the sequence is TWYILSSSLVSFFAPGFIMITVYC. The Cytoplasmic portion of the chain corresponds to 203 to 329; that stretch reads KIYRVAKQRS…QMREKRFTFV (127 aa). The tract at residues 238–280 is disordered; it reads KFEKESPSSNSSESNQRQEELDDIDLEESATSDNKPKSSRFSN. Positions 257 to 267 are enriched in acidic residues; that stretch reads ELDDIDLEESA. A helical membrane pass occupies residues 330 to 353; it reads LTVVMGVFVLCWFPFFFTYSLHAI. The Extracellular portion of the chain corresponds to 354-366; the sequence is CGDSCEPPEALFK. The chain crosses the membrane as a helical span at residues 367–387; the sequence is LFFWIGYCNSSVNPIIYTIFN. Over 388-436 the chain is Cytoplasmic; that stretch reads RDFRKAFKKICLLDCAAHLRDSCLGTLGRLNAKCIFECHQKSNQEETAN.

It belongs to the G-protein coupled receptor 1 family.

It localises to the cell membrane. Functionally, alpha-2 adrenergic receptors mediate the catecholamine-induced inhibition of adenylate cyclase through the action of G proteins. The sequence is that of Alpha-2 adrenergic receptor from Carassius auratus (Goldfish).